The chain runs to 274 residues: Ciliary microtubule inner protein 2B (274 aa).

Disordered regions lie at residues 46–89 (SPGL…SSMV) and 119–171 (TQRN…MDDR). Basic and acidic residues predominate over residues 130–155 (LPKEAKGEKDVEKDQEPKPEVEKEPE).

This sequence belongs to the CIMIP2 family. Microtubule inner protein component of sperm flagellar doublet microtubules. In terms of tissue distribution, expressed in trachea multiciliated cells.

It localises to the cytoplasm. It is found in the cytoskeleton. Its subcellular location is the cilium axoneme. The protein localises to the flagellum axoneme. Microtubule inner protein (MIP) part of the dynein-decorated doublet microtubules (DMTs) in cilia axoneme, which is required for motile cilia beating. This Bos taurus (Bovine) protein is Ciliary microtubule inner protein 2B (CIMIP2B).